A 533-amino-acid polypeptide reads, in one-letter code: (E)-beta-farnesene synthase (533 aa).

Mg(2+)-binding residues include Asp-286, Asp-290, Asn-430, Ser-434, and Glu-438. The short motif at 286–290 (DDMMD) is the DDXXD motif element.

Belongs to the terpene synthase family. Requires Mg(2+) as cofactor. The cofactor is Co(2+). Mn(2+) is required as a cofactor.

It is found in the cytoplasm. It carries out the reaction (2E,6E)-farnesyl diphosphate = (E)-beta-farnesene + diphosphate. It participates in secondary metabolite biosynthesis; terpenoid biosynthesis. In terms of biological role, sesquiterpene cyclase catalyzing the production of beta-farnesene and alpha-bergamotene in equal amounts from farnesyl diphosphate. Involved in indirect defense by producing volatile signals attracting natural enemies of herbivores. In Zea mays subsp. huehuetenangensis (San Antonio Huista teosinte), this protein is (E)-beta-farnesene synthase.